The primary structure comprises 393 residues: NAD(P)H-quinone oxidoreductase subunit H 1 (393 aa).

Belongs to the complex I 49 kDa subunit family. In terms of assembly, NDH-1 can be composed of about 15 different subunits; different subcomplexes with different compositions have been identified which probably have different functions.

The protein resides in the cell inner membrane. The catalysed reaction is a plastoquinone + NADH + (n+1) H(+)(in) = a plastoquinol + NAD(+) + n H(+)(out). It carries out the reaction a plastoquinone + NADPH + (n+1) H(+)(in) = a plastoquinol + NADP(+) + n H(+)(out). Its function is as follows. NDH-1 shuttles electrons from an unknown electron donor, via FMN and iron-sulfur (Fe-S) centers, to quinones in the respiratory and/or the photosynthetic chain. The immediate electron acceptor for the enzyme in this species is believed to be plastoquinone. Couples the redox reaction to proton translocation, and thus conserves the redox energy in a proton gradient. Cyanobacterial NDH-1 also plays a role in inorganic carbon-concentration. In Gloeobacter violaceus (strain ATCC 29082 / PCC 7421), this protein is NAD(P)H-quinone oxidoreductase subunit H 1.